A 76-amino-acid polypeptide reads, in one-letter code: Putative snRNP Sm-like protein (76 aa).

Residues 4–76 (RPLDVIHKSL…VLAISPVEIE (73 aa)) form the Sm domain.

This sequence belongs to the snRNP Sm proteins family.

The chain is Putative snRNP Sm-like protein from Thermococcus sibiricus (strain DSM 12597 / MM 739).